A 331-amino-acid chain; its full sequence is Fructose-1,6-bisphosphatase class 1 2 (331 aa).

4 residues coordinate Mg(2+): glutamate 80, aspartate 98, leucine 100, and aspartate 101. Residues 101-104 and asparagine 189 each bind substrate; that span reads DGSS. Glutamate 261 contributes to the Mg(2+) binding site.

This sequence belongs to the FBPase class 1 family. As to quaternary structure, homotetramer. Requires Mg(2+) as cofactor.

It localises to the cytoplasm. The catalysed reaction is beta-D-fructose 1,6-bisphosphate + H2O = beta-D-fructose 6-phosphate + phosphate. Its pathway is carbohydrate biosynthesis; Calvin cycle. This chain is Fructose-1,6-bisphosphatase class 1 2, found in Cereibacter sphaeroides (strain ATCC 17029 / ATH 2.4.9) (Rhodobacter sphaeroides).